We begin with the raw amino-acid sequence, 368 residues long: Galanin receptor type 3 (368 aa).

Over 1–20 (MADAQNISLDSPGSVGAVAV) the chain is Extracellular. N-linked (GlcNAc...) asparagine glycosylation is present at Asn-6. Residues 21 to 41 (PVVFALIFLLGTVGNGLVLAV) form a helical membrane-spanning segment. Residues 42 to 57 (LLQPGPSAWQEPGSTT) lie on the Cytoplasmic side of the membrane. A helical transmembrane segment spans residues 58-78 (DLFILNLAVADLCFILCCVPF). The Extracellular portion of the chain corresponds to 79–96 (QATIYTLDAWLFGALVCK). Cys-95 and Cys-172 form a disulfide bridge. Residues 97–118 (AVHLLIYLTMYASSFTLAAVSV) traverse the membrane as a helical segment. At 119 to 138 (DRYLAVRHPLRSRALRTPRN) the chain is on the cytoplasmic side. Residues 139-159 (ARAAVGLVWLLAALFSAPYLS) traverse the membrane as a helical segment. At 160–184 (YYGTVRYGALELCVPAWEDARRRAL) the chain is on the extracellular side. The helical transmembrane segment at 185–205 (DVATFAAGYLLPVAVVSLAYG) threads the bilayer. Over 206 to 236 (RTLRFLWAAVGPAGAAAAEARRRATGRAGRA) the chain is Cytoplasmic. Residues 237–257 (MLAVAALYALCWGPHHALILC) traverse the membrane as a helical segment. Residues 258–259 (FW) are Extracellular-facing. A helical transmembrane segment spans residues 260–280 (YGRFAFSPATYACRLASHCLA). Residues 281 to 368 (YANSCLNPLV…HGGEAARGPE (88 aa)) lie on the Cytoplasmic side of the membrane. Cys-308 carries the S-palmitoyl cysteine lipid modification. Residues 317–368 (RRALRRVRPASSGPPGCPGDARPSGRLLAGGGQGPEPREGPVHGGEAARGPE) are disordered.

It belongs to the G-protein coupled receptor 1 family.

The protein resides in the cell membrane. In terms of biological role, receptor for the hormone galanin. Receptor for the hormone spexin-1. The protein is Galanin receptor type 3 (GALR3) of Homo sapiens (Human).